The sequence spans 402 residues: LIM/homeobox protein Lhx5 (402 aa).

2 LIM zinc-binding domains span residues 3–61 (VHCA…RRFG) and 62–125 (TKCA…SSSL). Positions 124 to 148 (SLKEGSLNSVSSCTDRSLSPDLQDP) are enriched in low complexity. 2 disordered regions span residues 124 to 186 (SLKE…PRTT) and 298 to 402 (HGPP…AAVW). Residues 151–167 (DDPKETDNSTSSDKETA) show a composition bias toward basic and acidic residues. A DNA-binding region (homeobox) is located at residues 180-239 (RRGPRTTIKAKQLETLKAAFAATPKPTRHIREQLAQETGLNMRVIQVWFQNRRSKERRMK). Composition is skewed to low complexity over residues 300-311 (PPSQAQSPADSS) and 322-336 (PLGA…PHGA).

It localises to the nucleus. Plays an essential role in the regulation of neuronal differentiation and migration during development of the central nervous system. The chain is LIM/homeobox protein Lhx5 (Lhx5) from Mus musculus (Mouse).